A 266-amino-acid polypeptide reads, in one-letter code: Indole-3-glycerol phosphate synthase (266 aa).

The protein belongs to the TrpC family.

The enzyme catalyses 1-(2-carboxyphenylamino)-1-deoxy-D-ribulose 5-phosphate + H(+) = (1S,2R)-1-C-(indol-3-yl)glycerol 3-phosphate + CO2 + H2O. Its pathway is amino-acid biosynthesis; L-tryptophan biosynthesis; L-tryptophan from chorismate: step 4/5. This Herminiimonas arsenicoxydans protein is Indole-3-glycerol phosphate synthase.